Here is a 248-residue protein sequence, read N- to C-terminus: ATP synthase subunit a (248 aa).

The next 6 helical transmembrane spans lie at 27–47 (FTNS…LMLV), 83–103 (FFPL…IGIV), 113–133 (LIVT…YGFS), 142–162 (LFVP…IEVI), 192–212 (FVAM…LPLG), and 215–235 (IALT…FAIL).

The protein belongs to the ATPase A chain family. F-type ATPases have 2 components, CF(1) - the catalytic core - and CF(0) - the membrane proton channel. CF(1) has five subunits: alpha(3), beta(3), gamma(1), delta(1), epsilon(1). CF(0) has four main subunits: a, b, b' and c.

It is found in the cell inner membrane. Functionally, key component of the proton channel; it plays a direct role in the translocation of protons across the membrane. The sequence is that of ATP synthase subunit a from Rhodopseudomonas palustris (strain ATCC BAA-98 / CGA009).